The chain runs to 225 residues: MLRAGCQLLTQSTLPTGKTVGNSFALEFVRWRRKPRWLPVAKSKMFRVPERKKQSEEERTELMRLHNQYKTQLRSVRQFLREEVVRHEETSTADHIVLTPEQEEAEFQKCLDANAAWNAAIAKERDQRLAKKREEKVAYIQERLEAQQLREEERKEQANQRVLLEIERSKNYITRENLDAAIETALANPVDHNFAIDMAGNLYHGRSTSQLPDATPEPNQQVLSN.

Belongs to the mitochondrion-specific ribosomal protein mS26 family. Component of the mitochondrial ribosome small subunit (28S) which comprises a 12S rRNA and about 30 distinct proteins.

The protein localises to the mitochondrion. The protein is Small ribosomal subunit protein mS26 (mRpS26) of Drosophila melanogaster (Fruit fly).